A 258-amino-acid chain; its full sequence is Phosphate import ATP-binding protein PstB (258 aa).

Positions 12 to 253 (IEVKNLNFYY…PARKETEDYI (242 aa)) constitute an ABC transporter domain. Position 44–51 (44–51 (GPSGCGKS)) interacts with ATP.

The protein belongs to the ABC transporter superfamily. Phosphate importer (TC 3.A.1.7) family. The complex is composed of two ATP-binding proteins (PstB), two transmembrane proteins (PstC and PstA) and a solute-binding protein (PstS).

It is found in the cell inner membrane. The catalysed reaction is phosphate(out) + ATP + H2O = ADP + 2 phosphate(in) + H(+). Functionally, part of the ABC transporter complex PstSACB involved in phosphate import. Responsible for energy coupling to the transport system. The sequence is that of Phosphate import ATP-binding protein PstB from Bordetella avium (strain 197N).